Consider the following 381-residue polypeptide: Cytochrome b (381 aa).

4 consecutive transmembrane segments (helical) span residues 33–53 (FGSLLGICLVIQILTGLFLAM), 77–98 (WLIRNLHANGASMFFMCLFLHV), 113–133 (WNIGVMLLLTVTATAFVGYVL), and 178–198 (FFALHFLLPFVIAGLTLVHLT). Heme b-binding residues include His-83 and His-97. His-182 and His-196 together coordinate heme b. His-201 provides a ligand contact to a ubiquinone. 4 consecutive transmembrane segments (helical) span residues 226–246 (IKDILGLMFLLLVLLSLALFS), 288–308 (LGGVLALLASILILLVIPFLH), 320–340 (ISQTLFWILTANLITLTWIGG), and 347–367 (FIIIGQPASILYFPLIHHPMP).

It belongs to the cytochrome b family. In terms of assembly, the cytochrome bc1 complex contains 11 subunits: 3 respiratory subunits (MT-CYB, CYC1 and UQCRFS1), 2 core proteins (UQCRC1 and UQCRC2) and 6 low-molecular weight proteins (UQCRH/QCR6, UQCRB/QCR7, UQCRQ/QCR8, UQCR10/QCR9, UQCR11/QCR10 and a cleavage product of UQCRFS1). This cytochrome bc1 complex then forms a dimer. Requires heme b as cofactor.

It localises to the mitochondrion inner membrane. In terms of biological role, component of the ubiquinol-cytochrome c reductase complex (complex III or cytochrome b-c1 complex) that is part of the mitochondrial respiratory chain. The b-c1 complex mediates electron transfer from ubiquinol to cytochrome c. Contributes to the generation of a proton gradient across the mitochondrial membrane that is then used for ATP synthesis. This chain is Cytochrome b (MT-CYB), found in Sminthopsis youngsoni (Lesser hairy-footed dunnart).